A 153-amino-acid polypeptide reads, in one-letter code: Deoxyuridine 5'-triphosphate nucleotidohydrolase (153 aa).

Residues 71–73 (RSG), N84, 88–90 (LID), and M98 each bind substrate.

This sequence belongs to the dUTPase family. The cofactor is Mg(2+).

The catalysed reaction is dUTP + H2O = dUMP + diphosphate + H(+). It functions in the pathway pyrimidine metabolism; dUMP biosynthesis; dUMP from dCTP (dUTP route): step 2/2. This enzyme is involved in nucleotide metabolism: it produces dUMP, the immediate precursor of thymidine nucleotides and it decreases the intracellular concentration of dUTP so that uracil cannot be incorporated into DNA. This Hydrogenovibrio crunogenus (strain DSM 25203 / XCL-2) (Thiomicrospira crunogena) protein is Deoxyuridine 5'-triphosphate nucleotidohydrolase.